Reading from the N-terminus, the 93-residue chain is Stromal cell-derived factor 1 (93 aa).

Residues 1 to 21 (MDAKVVAVLALVLAALCISDG) form the signal peptide. Residues 22 to 23 (KP) carry the Receptor activation motif motif. A receptor and heparin binding region spans residues 29–33 (RCPCR). 2 cysteine pairs are disulfide-bonded: C30/C55 and C32/C71. 3 receptor binding regions span residues 39–41 (IAR), 48–50 (KIL), and 60–70 (VARLKNNNRQV). Heparin contacts are provided by residues 41 to 51 (RANVKHLKILN), R62, Q69, and K85.

Belongs to the intercrine alpha (chemokine CxC) family. Monomer or homodimer; in equilibrium. Dimer formation is induced by non acidic pH and the presence of multivalent anions, and by binding to CXCR4 or heparin. Monomeric form is required for full chemotactic activity and resistance to ischemia/reperfusion injury, whereas the dimeric form acts as a partial agonist of CXCR4, stimulating Ca2+ mobilization but with no chemotactic activity and instead acts as a selective antagonist that blocks chemotaxis induced by the monomeric form. Interacts with the N-terminus of ACKR3. Interacts with integrin subunit ITGB3 (via the allosteric site (site 2)). Interacts with TNFAIP6 (via Link domain). Highest expression levels detected in kidney, liver, spleen and muscle. Isoform Alpha is expressed ubiquitously but at varying levels, while isoform Beta displays tissue-specific expression, with expression detected in kidney, liver, heart, spleen and muscle but not in lung, colon, brain, skin and stomach.

The protein localises to the secreted. Functionally, chemoattractant active on T-lymphocytes and monocytes but not neutrophils. Activates the C-X-C chemokine receptor CXCR4 to induce a rapid and transient rise in the level of intracellular calcium ions and chemotaxis. Also binds to atypical chemokine receptor ACKR3, which activates the beta-arrestin pathway and acts as a scavenger receptor for SDF-1. Binds to the allosteric site (site 2) of integrins and activates integrins ITGAV:ITGB3, ITGA4:ITGB1 and ITGA5:ITGB1 in a CXCR4-independent manner. Acts as a positive regulator of monocyte migration and a negative regulator of monocyte adhesion via the LYN kinase. Stimulates migration of monocytes and T-lymphocytes through its receptors, CXCR4 and ACKR3, and decreases monocyte adherence to surfaces coated with ICAM-1, a ligand for beta-2 integrins. SDF1A/CXCR4 signaling axis inhibits beta-2 integrin LFA-1 mediated adhesion of monocytes to ICAM-1 through LYN kinase. Plays a protective role after myocardial infarction. Induces down-regulation and internalization of ACKR3 expressed in various cells. Has several critical functions during embryonic development; required for B-cell lymphopoiesis, myelopoiesis in bone marrow and heart ventricular septum formation. Stimulates the proliferation of bone marrow-derived B-cell progenitors in the presence of IL7 as well as growth of stromal cell-dependent pre-B-cells. This Mus musculus (Mouse) protein is Stromal cell-derived factor 1 (Cxcl12).